The chain runs to 736 residues: Gephyrin (736 aa).

The segment at 14–153 (QIRVGVLTVS…LPGSKKGSQE (140 aa)) is MPT Mo-transferase. 2 disordered regions span residues 181 to 232 (DELE…DSSS) and 260 to 290 (TASL…PKVQ). Residues 187 to 199 (PSPPPPLSPPPTT) are compositionally biased toward pro residues. Over residues 261-290 (ASLSTTPSESPRAQATSRLSTASCPTPKVQ) the composition is skewed to polar residues. Residues 294–736 (SSKENILRAS…VVDVMVIGRL (443 aa)) are MPT adenylyltransferase.

In the N-terminal section; belongs to the MoaB/Mog family. This sequence in the C-terminal section; belongs to the MoeA family. Homotrimer, homodimer and homooligomer. Interacts with glycine receptors. The cofactor is Mg(2+).

Its subcellular location is the postsynaptic cell membrane. The protein resides in the cell membrane. It localises to the cytoplasm. It is found in the cytosol. The protein localises to the cytoskeleton. Its subcellular location is the cell projection. The protein resides in the dendrite. It localises to the postsynaptic density. The enzyme catalyses molybdopterin + ATP + H(+) = adenylyl-molybdopterin + diphosphate. The catalysed reaction is adenylyl-molybdopterin + molybdate = Mo-molybdopterin + AMP + H(+). Its pathway is cofactor biosynthesis; molybdopterin biosynthesis. Functionally, microtubule-associated protein involved in membrane protein-cytoskeleton interactions. It is thought to anchor the inhibitory glycine receptor (GLYR) to subsynaptic microtubules. Acts as a major instructive molecule at inhibitory synapses, where it also clusters GABA type A receptors. In terms of biological role, also has a catalytic activity and catalyzes two steps in the biosynthesis of the molybdenum cofactor. In the first step, molybdopterin is adenylated. Subsequently, molybdate is inserted into adenylated molybdopterin and AMP is released. The polypeptide is Gephyrin (GPHN) (Gallus gallus (Chicken)).